The sequence spans 1331 residues: ABC multidrug transporter MDR2 (1331 aa).

The segment at 1-50 is disordered; sequence MVEPSEKPNTQNDDVSKQEIRNPVSSSSSTSDKEKVAKKGNSDATKSLTP. The segment covering 31–41 has biased composition (basic and acidic residues); that stretch reads SDKEKVAKKGN. Transmembrane regions (helical) follow at residues 93–113, 147–167, 219–239, and 242–262; these read MILL…LPLF, YFVY…VGFI, KVGL…IGYV, and WKLA…MGGI. The ABC transmembrane type-1 1 domain occupies 97-387; it reads AIVSLASIAA…VAPNTQAFAS (291 aa). The N-linked (GlcNAc...) asparagine glycan is linked to Asn293. 2 consecutive transmembrane segments (helical) span residues 325-345 and 358-378; these read LGIM…LGFW and LSAI…IGNV. Residues 422–667 enclose the ABC transporter 1 domain; that stretch reads IEFRGIKHIY…KGTYLQLVEA (246 aa). An ATP-binding site is contributed by 457-464; it reads GPSGSGKS. Asn529 is a glycosylation site (N-linked (GlcNAc...) asparagine). Helical transmembrane passes span 762–782 and 808–828; these read LCGF…SVFF and LMFL…GVIF. An ABC transmembrane type-1 2 domain is found at 764–1051; sequence GFFFAVLSGA…VFSFSPDMGK (288 aa). N-linked (GlcNAc...) asparagine glycosylation is present at Asn860. The next 4 membrane-spanning stretches (helical) occupy residues 884–904, 910–930, 995–1015, and 1025–1045; these read LGTI…ALAF, LVCI…FWIL, ASQS…GGLL, and FFLC…VFSF. Residues 1086–1324 enclose the ABC transporter 2 domain; sequence IEFRDVHFRY…KGRYYELVHM (239 aa). Asn1108 is a glycosylation site (N-linked (GlcNAc...) asparagine). 1121–1128 contacts ATP; the sequence is GPSGCGKS.

The protein belongs to the ABC transporter superfamily. ABCB family. Multidrug resistance exporter (TC 3.A.1.201) subfamily.

The protein resides in the cell membrane. The catalysed reaction is itraconazole(in) + ATP + H2O = itraconazole(out) + ADP + phosphate + H(+). ABC-type efflux transporter involved in the modulation susceptibility to itraconazole. The sequence is that of ABC multidrug transporter MDR2 from Trichophyton rubrum (strain ATCC MYA-4607 / CBS 118892) (Athlete's foot fungus).